A 550-amino-acid polypeptide reads, in one-letter code: Chaperonin GroEL 2 (550 aa).

ATP is bound by residues T30–P33, K51, D87–T91, G415, N480–A482, and D496.

Belongs to the chaperonin (HSP60) family. In terms of assembly, forms a cylinder of 14 subunits composed of two heptameric rings stacked back-to-back. Interacts with the co-chaperonin GroES.

The protein localises to the cytoplasm. It carries out the reaction ATP + H2O + a folded polypeptide = ADP + phosphate + an unfolded polypeptide.. Together with its co-chaperonin GroES, plays an essential role in assisting protein folding. The GroEL-GroES system forms a nano-cage that allows encapsulation of the non-native substrate proteins and provides a physical environment optimized to promote and accelerate protein folding. In Erythrobacter litoralis (strain HTCC2594), this protein is Chaperonin GroEL 2.